The primary structure comprises 213 residues: Outer-membrane lipoprotein LolB (213 aa).

An N-terminal signal peptide occupies residues methionine 1 to alanine 24. A lipid anchor (N-palmitoyl cysteine) is attached at cysteine 25. Cysteine 25 carries the S-diacylglycerol cysteine lipid modification.

It belongs to the LolB family. In terms of assembly, monomer.

The protein resides in the cell outer membrane. Plays a critical role in the incorporation of lipoproteins in the outer membrane after they are released by the LolA protein. The sequence is that of Outer-membrane lipoprotein LolB from Shewanella woodyi (strain ATCC 51908 / MS32).